Here is a 63-residue protein sequence, read N- to C-terminus: Large ribosomal subunit protein eL24 (63 aa).

4 residues coordinate Zn(2+): cysteine 7, cysteine 10, cysteine 33, and cysteine 37. A C4-type zinc finger spans residues 7–37; that stretch reads CSFCGGSIEPGTGLMYVLRNGQILWFCSSKC.

The protein belongs to the eukaryotic ribosomal protein eL24 family. In terms of assembly, part of the 50S ribosomal subunit. Forms a cluster with proteins L3 and L14. The cofactor is Zn(2+).

Its function is as follows. Binds to the 23S rRNA. This Aeropyrum pernix (strain ATCC 700893 / DSM 11879 / JCM 9820 / NBRC 100138 / K1) protein is Large ribosomal subunit protein eL24.